The primary structure comprises 502 residues: Probable cobyric acid synthase (502 aa).

The GATase cobBQ-type domain occupies K250–F448. C330 functions as the Nucleophile in the catalytic mechanism. H440 is a catalytic residue.

The protein belongs to the CobB/CobQ family. CobQ subfamily.

It participates in cofactor biosynthesis; adenosylcobalamin biosynthesis. Catalyzes amidations at positions B, D, E, and G on adenosylcobyrinic A,C-diamide. NH(2) groups are provided by glutamine, and one molecule of ATP is hydrogenolyzed for each amidation. The polypeptide is Probable cobyric acid synthase (Methanosphaera stadtmanae (strain ATCC 43021 / DSM 3091 / JCM 11832 / MCB-3)).